The primary structure comprises 405 residues: Lipase lipl-1 (405 aa).

Residues 1-20 (MRSWSTVMLAVLATAATVFG) form the signal peptide. N-linked (GlcNAc...) asparagine glycosylation occurs at Asn66. Ser169 (nucleophile) is an active-site residue. Asn273 carries N-linked (GlcNAc...) asparagine glycosylation. Active-site charge relay system residues include Asp344 and His376.

This sequence belongs to the AB hydrolase superfamily. Lipase family.

Its subcellular location is the secreted. It is found in the lysosome lumen. Functionally, lipase that, together with lipl-3, plays a role in the response to nutrient deprivation by controlling lipid metabolism. Specifically, involved in the breakdown of lipids during lipophagy, a process during which lipids contained in lipid droplets that have been delivered to lysosomes by autophagy are degraded. The sequence is that of Lipase lipl-1 from Caenorhabditis elegans.